The following is a 457-amino-acid chain: Equilibrative nucleoside transporter 1 (457 aa).

The Cytoplasmic segment spans residues 1 to 12 (MTTSHQPQDRYK). The helical transmembrane segment at 13 to 29 (AVWLIFFVLGLGTLLPW) threads the bilayer. Over 30-82 (NFFITATQYFTSRLNTSQNISLVTNQSCESTEALADPSVSLPARSSLSAIFNN) the chain is Extracellular. 3 N-linked (GlcNAc...) asparagine glycosylation sites follow: Asn44, Asn48, and Asn54. A helical transmembrane segment spans residues 83–107 (VMTLCAMLPLLIFTCLNSFLHQKVS). The Cytoplasmic portion of the chain corresponds to 108-111 (QSLR). The helical transmembrane segment at 112 to 130 (ILGSLLAILLVFLVTATLV) threads the bilayer. At 131 to 138 (KVQMDALS) the chain is on the extracellular side. The helical transmembrane segment at 139-157 (FFIITMIKIVLINSFGAIL) threads the bilayer. Over 158–174 (QASLFGLAGVLPANYTA) the chain is Cytoplasmic. Residues 175-199 (PIMSGQGLAGFFTSVAMICAVASGS) traverse the membrane as a helical segment. The Extracellular segment spans residues 200 to 206 (KLSESAF). The helical transmembrane segment at 207–227 (GYFITACAVVILAILCYLALP) threads the bilayer. Topologically, residues 228-291 (WMEFYRHYLQ…IKAILKSIWV (64 aa)) are cytoplasmic. At Ser254 the chain carries Phosphoserine. Basic and acidic residues predominate over residues 255–266 (EGEEPRGGREES). The segment at 255–275 (EGEEPRGGREESGVPGPNSLP) is disordered. At Ser273 the chain carries Phosphoserine. Residues 292-311 (LALSVCFIFTVTIGLFPAVT) traverse the membrane as a helical segment. Topologically, residues 312–323 (AEVESSIAGTSP) are extracellular. The chain crosses the membrane as a helical span at residues 324–343 (WKNCYFIPVACFLNFNVFDW). Over 344-360 (LGRSLTAICMWPGQDSR) the chain is Cytoplasmic. A helical membrane pass occupies residues 361 to 379 (WLPVLVACRVVFIPLLMLC). The Extracellular segment spans residues 380–394 (NVKQHHYLPSLFKHD). The chain crosses the membrane as a helical span at residues 395–414 (VWFITFMAAFAFSNGYLASL). The Cytoplasmic portion of the chain corresponds to 415–432 (CMCFGPKKVKPAEAETAG). The helical transmembrane segment at 433 to 453 (NIMSFFLCLGLALGAVLSFLL) threads the bilayer. Residues 454 to 457 (RALV) lie on the Extracellular side of the membrane.

It belongs to the SLC29A/ENT transporter (TC 2.A.57) family. In terms of assembly, identified in a complex with STOM. In terms of tissue distribution, expressed in jejunum, liver and lung. Expressed in testis at the blood-testis barrier (at protein level). Expressed in ventricular myocytes (at protein level). Expressed in kidney.

It is found in the basolateral cell membrane. The protein localises to the apical cell membrane. The protein resides in the cell membrane. It catalyses the reaction adenosine(in) = adenosine(out). The catalysed reaction is guanosine(in) = guanosine(out). The enzyme catalyses inosine(in) = inosine(out). It carries out the reaction uridine(out) = uridine(in). It catalyses the reaction thymidine(in) = thymidine(out). The catalysed reaction is cytidine(in) = cytidine(out). The enzyme catalyses adenine(out) = adenine(in). It carries out the reaction guanine(out) = guanine(in). It catalyses the reaction thymine(out) = thymine(in). The catalysed reaction is uracil(in) = uracil(out). The enzyme catalyses hypoxanthine(out) = hypoxanthine(in). Transport activity is sensitive to low concentrations of the inhibitor nitrobenzylmercaptopurine riboside (NBMPR). Functionally, uniporter involved in the facilitative transport of nucleosides and nucleobases, and contributes to maintaining their cellular homeostasis. Functions as a Na(+)-independent transporter. Involved in the transport of nucleosides such as adenosine, thymidine and uridine. Also transports purine nucleobases (hypoxanthine, adenine, guanine) and pyrimidine nucleobases (thymine, uracil). Mediates basolateral nucleoside uptake into Sertoli cells, thereby regulating the transport of nucleosides in testis across the blood-testis barrier. Regulates inosine levels in brown adipocytes tissues (BAT) and extracellular inosine levels, which controls BAT-dependent energy expenditure. The polypeptide is Equilibrative nucleoside transporter 1 (Rattus norvegicus (Rat)).